The primary structure comprises 372 residues: Tribbles homolog 1 (372 aa).

Disordered regions lie at residues 1–26 (MRVG…FPAA) and 49–85 (RLSE…CVSS). The span at 59 to 74 (YLSPPGSPCSPQPPPS) shows a compositional bias: pro residues. One can recognise a Protein kinase domain in the interval 91–338 (IADYLLLPLA…APQILLHPWF (248 aa)). The short motif at 355–360 (DQIVPE) is the COP1-binding element.

The protein belongs to the protein kinase superfamily. CAMK Ser/Thr protein kinase family. Tribbles subfamily. In terms of assembly, monomer. Interacts (via protein kinase domain) with CEBPA. Interacts with COP1.

Functionally, adapter protein involved in protein degradation by interacting with COP1 ubiquitin ligase. Promotes CEBPA degradation and inhibits its function. Controls macrophage, eosinophil and neutrophil differentiation via the COP1-binding domain. Regulates myeloid cell differentiation by altering the expression of CEBPA in a COP1-dependent manner. Interacts with MAPK kinases and regulates activation of MAP kinases, but has no kinase activity. In Mus musculus (Mouse), this protein is Tribbles homolog 1.